The chain runs to 426 residues: 4-aminobutyrate aminotransferase GabT (426 aa).

Residues 111 to 112 (GS) and Gln242 contribute to the pyridoxal 5'-phosphate site. Lys268 is subject to N6-(pyridoxal phosphate)lysine. Thr297 serves as a coordination point for pyridoxal 5'-phosphate.

It belongs to the class-III pyridoxal-phosphate-dependent aminotransferase family. Homotetramer. Pyridoxal 5'-phosphate is required as a cofactor.

It catalyses the reaction 4-aminobutanoate + 2-oxoglutarate = succinate semialdehyde + L-glutamate. The enzyme catalyses 5-aminopentanoate + 2-oxoglutarate = 5-oxopentanoate + L-glutamate. The protein operates within amino-acid degradation; 4-aminobutanoate degradation. It functions in the pathway amino-acid degradation. Functionally, pyridoxal phosphate-dependent enzyme that catalyzes transamination between primary amines and alpha-keto acids. Catalyzes the transfer of the amino group from gamma-aminobutyrate (GABA) to alpha-ketoglutarate (KG) to yield succinic semialdehyde (SSA) and glutamate. Thereby functions in a GABA degradation pathway that allows some E.coli strains to utilize GABA as a nitrogen source for growth. Also catalyzes the conversion of 5-aminovalerate to glutarate semialdehyde, as part of a L-lysine degradation pathway that proceeds via cadaverine, glutarate and L-2-hydroxyglutarate. This Escherichia coli (strain K12) protein is 4-aminobutyrate aminotransferase GabT (gabT).